We begin with the raw amino-acid sequence, 27 residues long: Flagellar filament 31.5 kDa core protein (27 aa).

This sequence belongs to the bacterial flagellin family. As to quaternary structure, the flagellum consists of an outer layer composed of repeating units of FlaA around a core that contains one or all of five antigenically related polypeptides.

It localises to the periplasmic flagellum. Its subcellular location is the periplasm. Functionally, component of the core of the flagella. The sequence is that of Flagellar filament 31.5 kDa core protein from Spirochaeta aurantia.